The primary structure comprises 134 residues: Terepressin/terephysin (134 aa).

The first 33 residues, 1–33, serve as a signal peptide directing secretion; sequence MKCSVLPRSRLSWTMCVLLLPLLMLMLEGGVQG. Cys-34 and Cys-39 are oxidised to a cystine. Residues 44–50 constitute a propeptide that is removed on maturation; the sequence is KRAVDSV. 7 disulfide bridges follow: Cys-56–Cys-100, Cys-59–Cys-73, Cys-67–Cys-90, Cys-74–Cys-80, Cys-107–Cys-121, Cys-115–Cys-133, and Cys-122–Cys-127.

Belongs to the vasopressin/oxytocin family. In terms of processing, contains 7 disulfide bonds. Expressed by the venom duct.

Its subcellular location is the secreted. The chain is Terepressin/terephysin from Terebra subulata (Chocolate spotted auger).